We begin with the raw amino-acid sequence, 177 residues long: ATP synthase subunit delta (177 aa).

The protein belongs to the ATPase delta chain family. F-type ATPases have 2 components, F(1) - the catalytic core - and F(0) - the membrane proton channel. F(1) has five subunits: alpha(3), beta(3), gamma(1), delta(1), epsilon(1). F(0) has three main subunits: a(1), b(2) and c(10-14). The alpha and beta chains form an alternating ring which encloses part of the gamma chain. F(1) is attached to F(0) by a central stalk formed by the gamma and epsilon chains, while a peripheral stalk is formed by the delta and b chains.

It is found in the cell inner membrane. Its function is as follows. F(1)F(0) ATP synthase produces ATP from ADP in the presence of a proton or sodium gradient. F-type ATPases consist of two structural domains, F(1) containing the extramembraneous catalytic core and F(0) containing the membrane proton channel, linked together by a central stalk and a peripheral stalk. During catalysis, ATP synthesis in the catalytic domain of F(1) is coupled via a rotary mechanism of the central stalk subunits to proton translocation. In terms of biological role, this protein is part of the stalk that links CF(0) to CF(1). It either transmits conformational changes from CF(0) to CF(1) or is implicated in proton conduction. This is ATP synthase subunit delta from Cronobacter sakazakii (strain ATCC BAA-894) (Enterobacter sakazakii).